Consider the following 176-residue polypeptide: NAD(P)H-quinone oxidoreductase subunit 6, chloroplastic (176 aa).

The next 5 membrane-spanning stretches (helical) occupy residues 10–30 (FLLVFLGLGLIVGGLGVVLLT), 33–53 (IYSAFSLGLVLVCISLFHIPA), 61–81 (AQLLIYVGAINVLIVFAVMFM), 92–112 (LWTVGDGVTSLVCTSIFVSLI), and 152–172 (FFLPFELISIILLVALIGAIA).

The protein belongs to the complex I subunit 6 family. NDH is composed of at least 16 different subunits, 5 of which are encoded in the nucleus.

Its subcellular location is the plastid. It localises to the chloroplast thylakoid membrane. It carries out the reaction a plastoquinone + NADH + (n+1) H(+)(in) = a plastoquinol + NAD(+) + n H(+)(out). The enzyme catalyses a plastoquinone + NADPH + (n+1) H(+)(in) = a plastoquinol + NADP(+) + n H(+)(out). Its function is as follows. NDH shuttles electrons from NAD(P)H:plastoquinone, via FMN and iron-sulfur (Fe-S) centers, to quinones in the photosynthetic chain and possibly in a chloroplast respiratory chain. The immediate electron acceptor for the enzyme in this species is believed to be plastoquinone. Couples the redox reaction to proton translocation, and thus conserves the redox energy in a proton gradient. This Nandina domestica (Heavenly bamboo) protein is NAD(P)H-quinone oxidoreductase subunit 6, chloroplastic (ndhG).